The primary structure comprises 230 residues: Peptidyl-prolyl cis-trans isomerase FKBP16-4, chloroplastic (230 aa).

A chloroplast-targeting transit peptide spans 1-56; the sequence is MILTMKLVHPLHHSLSSSIPFPSRKRQSKPYRCSLPSPGCEKVIRTETVLPPAPVS. The 95-residue stretch at 123-217 folds into the PPIase FKBP-type domain; that stretch reads GSRVAVHYVA…ELDIELLSIK (95 aa).

Belongs to the FKBP-type PPIase family.

The protein resides in the plastid. The protein localises to the chloroplast thylakoid lumen. It catalyses the reaction [protein]-peptidylproline (omega=180) = [protein]-peptidylproline (omega=0). Its function is as follows. PPIases accelerate the folding of proteins. It catalyzes the cis-trans isomerization of proline imidic peptide bonds in oligopeptides. This chain is Peptidyl-prolyl cis-trans isomerase FKBP16-4, chloroplastic (FKBP16-4), found in Arabidopsis thaliana (Mouse-ear cress).